Consider the following 446-residue polypeptide: Na(+)-translocating NADH-quinone reductase subunit A (446 aa).

Belongs to the NqrA family. In terms of assembly, composed of six subunits; NqrA, NqrB, NqrC, NqrD, NqrE and NqrF.

The catalysed reaction is a ubiquinone + n Na(+)(in) + NADH + H(+) = a ubiquinol + n Na(+)(out) + NAD(+). NQR complex catalyzes the reduction of ubiquinone-1 to ubiquinol by two successive reactions, coupled with the transport of Na(+) ions from the cytoplasm to the periplasm. NqrA to NqrE are probably involved in the second step, the conversion of ubisemiquinone to ubiquinol. In Vibrio anguillarum (Listonella anguillarum), this protein is Na(+)-translocating NADH-quinone reductase subunit A.